The chain runs to 209 residues: N-(5'-phosphoribosyl)anthranilate isomerase (209 aa).

The protein belongs to the TrpF family.

It catalyses the reaction N-(5-phospho-beta-D-ribosyl)anthranilate = 1-(2-carboxyphenylamino)-1-deoxy-D-ribulose 5-phosphate. Its pathway is amino-acid biosynthesis; L-tryptophan biosynthesis; L-tryptophan from chorismate: step 3/5. This Pyrobaculum islandicum (strain DSM 4184 / JCM 9189 / GEO3) protein is N-(5'-phosphoribosyl)anthranilate isomerase.